Reading from the N-terminus, the 342-residue chain is MVKELATETNILAIESSCDETAAAIVSDGTRVRANIIASQIAVHRRFGGVVPEIASRHHMENIVPVVSEALATAGLAFSDVDAVAVTYGPGLVGALLVGVAYAKSLAYALGKPLIGVHHLLGHIYAGFLAYPGLPLPAVSLVVSGGHTNLVYLEDHTTRRILGSTRDDAAGEAFDKVARVLGLPYPGGPELEKLAREGNPRAIPFPRAWLEENSLDFSFSGLKSAVINYLHHARQVGQEVNRADVAASFQAAVAEVLVTKTLLAATSYRARSILLAGGVAANSVLRRELRSAGEQAGLPVFFPPRELCTDNAAMIGCAAYYQYLRRDFAPLSLNAIPDLPLN.

Residues His119 and His123 each coordinate Fe cation. Substrate is bound by residues 142-146 (VVSGG), Asp175, Gly188, and Asn282. A Fe cation-binding site is contributed by Asp310.

It belongs to the KAE1 / TsaD family. Fe(2+) is required as a cofactor.

It is found in the cytoplasm. The enzyme catalyses L-threonylcarbamoyladenylate + adenosine(37) in tRNA = N(6)-L-threonylcarbamoyladenosine(37) in tRNA + AMP + H(+). Required for the formation of a threonylcarbamoyl group on adenosine at position 37 (t(6)A37) in tRNAs that read codons beginning with adenine. Is involved in the transfer of the threonylcarbamoyl moiety of threonylcarbamoyl-AMP (TC-AMP) to the N6 group of A37, together with TsaE and TsaB. TsaD likely plays a direct catalytic role in this reaction. This Moorella thermoacetica (strain ATCC 39073 / JCM 9320) protein is tRNA N6-adenosine threonylcarbamoyltransferase.